Here is a 329-residue protein sequence, read N- to C-terminus: DGAT1/2-independent enzyme synthesizing storage lipids (329 aa).

The Lumenal portion of the chain corresponds to 1–50 (MIDNNQTCAAGQDSVPYVTCMIYVLEEWLGVEQLEDYLNFANHLLWVFTP). Asn-5 carries N-linked (GlcNAc...) asparagine glycosylation. Residues 51–71 (LILLILPYFTIFLLYLTIIFL) form a helical membrane-spanning segment. At 72–120 (HIYKRKNVLKEAYSHNLWDGARKTVATLWDGHAAVWHGYEVHGMEKIPE) the chain is on the cytoplasmic side. Residues 121–141 (GAALIIFYHGAIPIDFYYFMA) traverse the membrane as a helical segment. His-129 is an active-site residue. Topologically, residues 142-329 (KIFIQKGRTC…DRFHKEQKAH (188 aa)) are lumenal.

This sequence belongs to the diacylglycerol acyltransferase family. Highly divergent. In terms of tissue distribution, widely expressed, with highest level in the brain, followed by lung and duodenum, and lowest levels in tongue, testis, skin and ileum.

The protein resides in the endoplasmic reticulum membrane. The catalysed reaction is a 1,2-diacylglycerol + a 1,2-diacyl-sn-glycero-3-phosphocholine = a triacylglycerol + a 1-acyl-sn-glycero-3-phosphocholine. It carries out the reaction a 1-O-alkyl-2-acyl-sn-glycero-3-phosphocholine + a 1,2-diacylglycerol = a 1-O-alkyl-sn-glycero-3-phosphocholine + a triacylglycerol. It catalyses the reaction a 2-acylglycerol + an acyl-CoA = a 1,2-diacylglycerol + CoA. The enzyme catalyses an acyl-CoA + a 1,2-diacyl-sn-glycerol = a triacyl-sn-glycerol + CoA. The catalysed reaction is 2-(9Z-octadecenoyl)-glycerol + (9Z)-octadecenoyl-CoA = 1,2-di-(9Z-octadecenoyl)-glycerol + CoA. It carries out the reaction 1,2-di-(9Z-octadecenoyl)-sn-glycerol + (9Z)-octadecenoyl-CoA = 1,2,3-tri-(9Z-octadecenoyl)-glycerol + CoA. With respect to regulation, acyltransferase activity is specifically inhibited by TMX1 at the endoplasmic reticulum, restricting accumulation of triacylglycerol. Functionally, catalytic subunit of the alternative triglyceride biosynthesis pathway, which mediates formation of triacylglycerol from diacylglycerol and membrane phospholipids. Synthesizes triacylglycerol at the expense of membrane phospholipids, such as phosphatidylcholine (PC) and its ether-linked form (ePC), thereby altering the composition of membranes. The alternative triglyceride biosynthesis pathway is probably required to provide the energy required for rapid growth when fuel sources are limiting. It maintains mitochondrial function during periods of extracellular lipid starvation. Can also use acyl-CoA as donor: acts as a acyl-CoA:monoacylglycerol acyltransferase (MGAT), but also shows acyl-CoA:diacylglycerol acyltransferase (DGAT) activity. The chain is DGAT1/2-independent enzyme synthesizing storage lipids from Mus musculus (Mouse).